A 557-amino-acid chain; its full sequence is NADH-quinone oxidoreductase subunit C/D (557 aa).

The segment covering 1 to 13 (MSLEEQQSDDPAE) has biased composition (acidic residues). Positions 1-20 (MSLEEQQSDDPAELESGVSR) are disordered. The tract at residues 1–174 (MSLEEQQSDD…ATLREHANPL (174 aa)) is NADH dehydrogenase I subunit C. An NADH dehydrogenase I subunit D region spans residues 184–557 (NTMYINIGPH…LDIVLGEVDR (374 aa)). Lys-517 is covalently cross-linked (Glycyl lysine isopeptide (Lys-Gly) (interchain with G-Cter in SAMP2)).

The protein in the N-terminal section; belongs to the complex I 30 kDa subunit family. It in the C-terminal section; belongs to the complex I 49 kDa subunit family. As to quaternary structure, NDH-1 is composed of 13 different subunits. Subunits NuoB, CD, E, F, and G constitute the peripheral sector of the complex.

The protein localises to the cell membrane. It catalyses the reaction a quinone + NADH + 5 H(+)(in) = a quinol + NAD(+) + 4 H(+)(out). NDH-1 shuttles electrons from NADH, via FMN and iron-sulfur (Fe-S) centers, to quinones in the respiratory chain. Couples the redox reaction to proton translocation (for every two electrons transferred, four hydrogen ions are translocated across the cytoplasmic membrane), and thus conserves the redox energy in a proton gradient. This chain is NADH-quinone oxidoreductase subunit C/D (nuoCD), found in Haloferax volcanii (strain ATCC 29605 / DSM 3757 / JCM 8879 / NBRC 14742 / NCIMB 2012 / VKM B-1768 / DS2) (Halobacterium volcanii).